Here is a 415-residue protein sequence, read N- to C-terminus: Gamma-glutamyl phosphate reductase (415 aa).

Belongs to the gamma-glutamyl phosphate reductase family.

The protein localises to the cytoplasm. It catalyses the reaction L-glutamate 5-semialdehyde + phosphate + NADP(+) = L-glutamyl 5-phosphate + NADPH + H(+). Its pathway is amino-acid biosynthesis; L-proline biosynthesis; L-glutamate 5-semialdehyde from L-glutamate: step 2/2. Its function is as follows. Catalyzes the NADPH-dependent reduction of L-glutamate 5-phosphate into L-glutamate 5-semialdehyde and phosphate. The product spontaneously undergoes cyclization to form 1-pyrroline-5-carboxylate. The sequence is that of Gamma-glutamyl phosphate reductase from Listeria innocua serovar 6a (strain ATCC BAA-680 / CLIP 11262).